A 148-amino-acid chain; its full sequence is Lysozyme C (148 aa).

A signal peptide spans 1 to 18; sequence MKAPLLLGLLLLSVTVQG. The 130-residue stretch at 19–148 folds into the C-type lysozyme domain; it reads KVFERCDLAR…VSQYVRNCGV (130 aa). 4 disulfide bridges follow: cysteine 24-cysteine 146, cysteine 48-cysteine 134, cysteine 83-cysteine 99, and cysteine 95-cysteine 113. Catalysis depends on residues glutamate 53 and aspartate 71.

The protein belongs to the glycosyl hydrolase 22 family. Monomer.

It localises to the secreted. It carries out the reaction Hydrolysis of (1-&gt;4)-beta-linkages between N-acetylmuramic acid and N-acetyl-D-glucosamine residues in a peptidoglycan and between N-acetyl-D-glucosamine residues in chitodextrins.. In terms of biological role, lysozymes have primarily a bacteriolytic function; those in tissues and body fluids are associated with the monocyte-macrophage system and enhance the activity of immunoagents. This Leptonychotes weddellii (Weddell seal) protein is Lysozyme C (LYZ).